Here is a 460-residue protein sequence, read N- to C-terminus: Cysteine--tRNA ligase (460 aa).

Cys28 contacts Zn(2+). The 'HIGH' region signature appears at 30–40 (MTVYDYCHLGH). 3 residues coordinate Zn(2+): Cys209, His234, and Glu238. The short motif at 266–270 (KMSKS) is the 'KMSKS' region element. Lys269 is a binding site for ATP.

The protein belongs to the class-I aminoacyl-tRNA synthetase family. In terms of assembly, monomer. Requires Zn(2+) as cofactor.

It is found in the cytoplasm. It catalyses the reaction tRNA(Cys) + L-cysteine + ATP = L-cysteinyl-tRNA(Cys) + AMP + diphosphate. This is Cysteine--tRNA ligase from Pseudomonas syringae pv. tomato (strain ATCC BAA-871 / DC3000).